A 257-amino-acid polypeptide reads, in one-letter code: Protein YIPF5 (257 aa).

The Cytoplasmic portion of the chain corresponds to 1-124; that stretch reads MSGFENLNTD…KVADGSIMNE (124 aa). The interaction with Sec23 stretch occupies residues 75 to 106; that stretch reads PASPQPFYGNSFEDEPPLLEELGINFDHIWQK. A helical transmembrane segment spans residues 125–145; it reads TDLAGPMVFCLAFGATLLLAG. Lys146 is a topological domain (lumenal). The helical transmembrane segment at 147–167 threads the bilayer; it reads IQFGYVYGISAIGCLGMFCLL. Residues 168 to 173 lie on the Cytoplasmic side of the membrane; the sequence is NLMSMT. Residues 174–194 form a helical membrane-spanning segment; sequence GVSFGCVASVLGYCLLPMILL. The Lumenal portion of the chain corresponds to 195-196; the sequence is SS. The chain crosses the membrane as a helical span at residues 197 to 217; sequence FAVIFSLQGMVGIILTAGIIG. Topologically, residues 218-236 are cytoplasmic; it reads WCSFSASKIFISALAMEGQ. Residues 237–257 traverse the membrane as a helical segment; the sequence is QLLVAYPCALLYGVFALISVF.

It belongs to the YIP1 family. As to quaternary structure, interacts with the COPII coat components Sec23 (SEC23A and/or SEC23B) and Sec24 (SEC24A and/or SEC24B). Interacts with YIF1A. May interact with RAB1A. Interacts with YIPF3 and YIPF4.

The protein localises to the endoplasmic reticulum membrane. It is found in the golgi apparatus. It localises to the cis-Golgi network membrane. Its subcellular location is the cytoplasmic vesicle. The protein resides in the COPII-coated vesicle. In terms of biological role, plays a role in transport between endoplasmic reticulum and Golgi. In pancreatic beta cells, required to transport proinsulin from endoplasmic reticulum into the Golgi. In Macaca fascicularis (Crab-eating macaque), this protein is Protein YIPF5 (YIPF5).